The primary structure comprises 309 residues: Protein FdhE (309 aa).

The protein belongs to the FdhE family.

The protein resides in the cytoplasm. In terms of biological role, necessary for formate dehydrogenase activity. The sequence is that of Protein FdhE from Salmonella enteritidis PT4 (strain P125109).